Here is a 196-residue protein sequence, read N- to C-terminus: uncharacterized protein (196 aa).

This is an uncharacterized protein from Aquifex aeolicus (strain VF5).